The following is a 661-amino-acid chain: MKGLFPAGGGNPPSSYLSRFLPHRKERSPENVTSGRNGVPHRGRMLSLALGALGIVYGDIGTSPLYTIKECFHGTHAIAPNPANIMGVLSLILWSLTMVVSIKYITFMMRADNRGEGGIFALLALVPMSGKLISRGARAVVVMAALTGAALLYGDGFITPSITVLSAIEGLEVATDAAKNLIVPLACGILLGLFLVQSRGTAKIGRIFGPVMLVWFATIATLGLLCIVRNPVVLDAVSPVYAYRFFAEHHVHGLVVLGSVVLSITGGEALYADMGHFGRVPIRLSWFAMVFPSLLLNYFGQGAALLEQPDLAFNPFYGLVPRVLLLPMVALATMASIIASQAMISGAFSLTRQAVQLGYIPRVTIVHTSAETEGQIYIPEVNRLMMVVCIGLVLVFRASSGLAGAYGVAVTANMAITSVVYFFVATRTWGWSTAKTAPLVGLFLVFDITYFGSNLLKFFDGGWFPLAVALVIVIVMASWKDGRAELYKHIVKSSPTLDMFLEDVSRHNVHRVAGTAVFMASTSSLTPPSLMHHFKHNKVLHEEVILLTIEVTHTPQVPAAERIRVEELGEGFHRIVARFGFMETPNVPQIMDSAYRARLVPQVLPVSYYLGRETLIPSGPSRMMPWRKRLFAFLSRNSQSATNYFGLPPGQVVELGVQIEF.

The segment covering 1–11 has biased composition (gly residues); sequence MKGLFPAGGGN. Positions 1 to 38 are disordered; that stretch reads MKGLFPAGGGNPPSSYLSRFLPHRKERSPENVTSGRNG. Helical transmembrane passes span 48–68, 85–105, 139–159, 177–197, 207–227, 251–271, 286–306, 324–344, 384–404, 405–425, 436–456, and 458–478; these read LALGALGIVYGDIGTSPLYTI, IMGVLSLILWSLTMVVSIKYI, AVVVMAALTGAALLYGDGFIT, AAKNLIVPLACGILLGLFLVQ, IFGPVMLVWFATIATLGLLCI, VHGLVVLGSVVLSITGGEALY, WFAMVFPSLLLNYFGQGAALL, LLLPMVALATMASIIASQAMI, LMMVVCIGLVLVFRASSGLAG, AYGVAVTANMAITSVVYFFVA, TAPLVGLFLVFDITYFGSNLL, and FFDGGWFPLAVALVIVIVMAS.

Belongs to the HAK/KUP transporter (TC 2.A.72) family.

It is found in the cell inner membrane. It carries out the reaction K(+)(in) + H(+)(in) = K(+)(out) + H(+)(out). In terms of biological role, transport of potassium into the cell. Likely operates as a K(+):H(+) symporter. The polypeptide is Probable potassium transport system protein Kup 1 (Syntrophobacter fumaroxidans (strain DSM 10017 / MPOB)).